The following is a 600-amino-acid chain: MVNNMTDLTAQDAAWSTRDHLDDPVIGELRNRFGPDAFTVQATRTGVPVVWVKREQLLEVGDFLKKLPKPYVMLFDLHGMDERLRTHRDGLPAADFSVFYHLISIERNRDIMLKVALSENDLRVPTFTKLFPNANWYERETWEMFGIDIEGHPHLTRIMMPQTWEGHPLRKDYPARATEFDPFELTKAKQDLEMEALTFKPEDWGMKRGTDNEDFMFLNLGPNHPSAHGAFRIILQLDGEEIVDCVPDIGYHHRGAEKMGERQSWHSYIPYTDRIEYLGGCVNEMPYVLAVEKLAGITVPDRVNVIRVMLSELFRINSHLLYISTFIQDVGAMTPVFFAFTDRQKIYDLVEAITGFRMHPAWFRIGGVAHDLPRGWERLLREFLEWMPKRLDSYEKAALRNTILKGRSQGVAAYGAKEALEWGTTGAGLRATGIDFDVRKWRPYSGYENFDFEVPVGGGVSDCYTRVMLKVEELRQSLRILQQCLDNMPEGPFKADHPLTTPPPKERTLQHIETLITHFLQVSWGPVMPAQESFQMVEATKGINSYYLTSDGSTMSYRTRVRTPSFAHLQQIPSAIRGSLVSDLIVYLGSIDFVMSDVDR.

Positions 1-190 (MVNNMTDLTA…DPFELTKAKQ (190 aa)) are NADH dehydrogenase I subunit C. The interval 214 to 600 (DFMFLNLGPN…IDFVMSDVDR (387 aa)) is NADH dehydrogenase I subunit D.

This sequence in the N-terminal section; belongs to the complex I 30 kDa subunit family. It in the C-terminal section; belongs to the complex I 49 kDa subunit family. NDH-1 is composed of 13 different subunits. Subunits NuoB, CD, E, F, and G constitute the peripheral sector of the complex.

It localises to the cell inner membrane. The enzyme catalyses a quinone + NADH + 5 H(+)(in) = a quinol + NAD(+) + 4 H(+)(out). In terms of biological role, NDH-1 shuttles electrons from NADH, via FMN and iron-sulfur (Fe-S) centers, to quinones in the respiratory chain. The immediate electron acceptor for the enzyme in this species is believed to be ubiquinone. Couples the redox reaction to proton translocation (for every two electrons transferred, four hydrogen ions are translocated across the cytoplasmic membrane), and thus conserves the redox energy in a proton gradient. The sequence is that of NADH-quinone oxidoreductase subunit C/D from Salmonella arizonae (strain ATCC BAA-731 / CDC346-86 / RSK2980).